A 169-amino-acid polypeptide reads, in one-letter code: Cell division inhibitor SulA (169 aa).

Residues 106–112 are ftsZ binding; that stretch reads ALRTGNY. The tract at residues 162–169 is lon protease binding; that stretch reads KIHSNLYH.

Belongs to the SulA family. In terms of assembly, interacts with FtsZ. Is rapidly cleaved and degraded by the Lon protease once DNA damage is repaired.

Component of the SOS system and an inhibitor of cell division. Accumulation of SulA causes rapid cessation of cell division and the appearance of long, non-septate filaments. In the presence of GTP, binds a polymerization-competent form of FtsZ in a 1:1 ratio, thus inhibiting FtsZ polymerization and therefore preventing it from participating in the assembly of the Z ring. This mechanism prevents the premature segregation of damaged DNA to daughter cells during cell division. The chain is Cell division inhibitor SulA from Salmonella choleraesuis (strain SC-B67).